Here is a 556-residue protein sequence, read N- to C-terminus: Membrane protein insertase YidC (556 aa).

5 helical membrane passes run 6–26 (IVLYMALALIGLSLWNAWQID), 332–352 (LDLTVDYGILWFLSSLLFSLM), 358–378 (VVGNWGWSIVLVTVLIKLAFY), 428–448 (LGGCLPILIQIPVFIALYWVL), and 501–521 (VMMFLPILFTGLFWNFPSGLV).

The protein belongs to the OXA1/ALB3/YidC family. Type 1 subfamily. In terms of assembly, interacts with the Sec translocase complex via SecD. Specifically interacts with transmembrane segments of nascent integral membrane proteins during membrane integration.

It localises to the cell inner membrane. Required for the insertion and/or proper folding and/or complex formation of integral membrane proteins into the membrane. Involved in integration of membrane proteins that insert both dependently and independently of the Sec translocase complex, as well as at least some lipoproteins. Aids folding of multispanning membrane proteins. This is Membrane protein insertase YidC from Legionella pneumophila (strain Lens).